A 633-amino-acid chain; its full sequence is Chitin synthase regulatory factor 4 (633 aa).

The segment at 121-151 (ATSSQETKRDRPLPNIRNSAPSATRSHSTPC) is disordered. A compositionally biased stretch (polar residues) spans 136-149 (IRNSAPSATRSHST). Position 148 is a phosphoserine (Ser148). 5 Sel1-like repeats span residues 278–314 (AKAM…NLGY), 315–346 (TRSL…SEND), 438–474 (SSAQ…KRGE), 475–511 (TEAD…MAGN), and 512–543 (ANAQ…KAGH). Residues 583–613 (ASETSPPHAPAVSSTPVTSAPPVSQTKVTKV) form a disordered region. Residues 592–613 (PAVSSTPVTSAPPVSQTKVTKV) show a composition bias toward low complexity.

It is found in the cytoplasm. Involved in septum formation. Required for the proper localization of chs2 at the septum. The sequence is that of Chitin synthase regulatory factor 4 (chr4) from Schizosaccharomyces pombe (strain 972 / ATCC 24843) (Fission yeast).